The following is a 147-amino-acid chain: Cyanate hydratase (147 aa).

Residues R88, E91, and S114 contribute to the active site.

The protein belongs to the cyanase family.

The enzyme catalyses cyanate + hydrogencarbonate + 3 H(+) = NH4(+) + 2 CO2. Catalyzes the reaction of cyanate with bicarbonate to produce ammonia and carbon dioxide. This is Cyanate hydratase from Methylibium petroleiphilum (strain ATCC BAA-1232 / LMG 22953 / PM1).